Here is a 75-residue protein sequence, read N- to C-terminus: DNA-directed RNA polymerase subunit omega (75 aa).

The protein belongs to the RNA polymerase subunit omega family. In terms of assembly, in cyanobacteria the RNAP catalytic core is composed of 2 alpha, 1 beta, 1 beta', 1 gamma and 1 omega subunit. When a sigma factor is associated with the core the holoenzyme is formed, which can initiate transcription.

It carries out the reaction RNA(n) + a ribonucleoside 5'-triphosphate = RNA(n+1) + diphosphate. Promotes RNA polymerase assembly. Latches the N- and C-terminal regions of the beta' subunit thereby facilitating its interaction with the beta and alpha subunits. The polypeptide is DNA-directed RNA polymerase subunit omega (Synechococcus sp. (strain CC9605)).